The chain runs to 580 residues: 2-succinyl-5-enolpyruvyl-6-hydroxy-3-cyclohexene-1-carboxylate synthase (580 aa).

It belongs to the TPP enzyme family. MenD subfamily. Homodimer. Mg(2+) serves as cofactor. Requires Mn(2+) as cofactor. The cofactor is thiamine diphosphate.

It catalyses the reaction isochorismate + 2-oxoglutarate + H(+) = 5-enolpyruvoyl-6-hydroxy-2-succinyl-cyclohex-3-ene-1-carboxylate + CO2. The protein operates within quinol/quinone metabolism; 1,4-dihydroxy-2-naphthoate biosynthesis; 1,4-dihydroxy-2-naphthoate from chorismate: step 2/7. Its pathway is quinol/quinone metabolism; menaquinone biosynthesis. Functionally, catalyzes the thiamine diphosphate-dependent decarboxylation of 2-oxoglutarate and the subsequent addition of the resulting succinic semialdehyde-thiamine pyrophosphate anion to isochorismate to yield 2-succinyl-5-enolpyruvyl-6-hydroxy-3-cyclohexene-1-carboxylate (SEPHCHC). The protein is 2-succinyl-5-enolpyruvyl-6-hydroxy-3-cyclohexene-1-carboxylate synthase of Bacillus pumilus (strain SAFR-032).